We begin with the raw amino-acid sequence, 338 residues long: Fructose-1,6-bisphosphatase 1 (338 aa).

The residue at position 2 (A2) is an N-acetylalanine. AMP is bound by residues 18-22 (VMEEG) and 28-32 (TGEMT). Positions 69 and 98 each coordinate Mg(2+). Residue 113–114 (KY) coordinates AMP. 3 residues coordinate Mg(2+): D119, L121, and D122. Substrate is bound at residue 122 to 125 (DGSS). R141 is an AMP binding site. Residue K151 is modified to N6-succinyllysine. Substrate is bound by residues 213-216 (NEGY), 244-249 (RYVGSM), Y265, and 275-277 (KLR). Y216, Y245, and Y265 each carry phosphotyrosine. Residue E281 coordinates Mg(2+).

The protein belongs to the FBPase class 1 family. In terms of assembly, homotetramer. It depends on Mg(2+) as a cofactor.

The catalysed reaction is beta-D-fructose 1,6-bisphosphate + H2O = beta-D-fructose 6-phosphate + phosphate. It functions in the pathway carbohydrate biosynthesis; gluconeogenesis. Subject to complex allosteric regulation. The enzyme can assume an active R-state, or an inactive T-state. Intermediate conformations may exist. AMP acts as an allosteric inhibitor. AMP binding affects the turnover of bound substrate and not the affinity for substrate. Fructose 2,6-bisphosphate acts as a competitive inhibitor. Fructose 2,6-bisphosphate and AMP have synergistic effects. In terms of biological role, catalyzes the hydrolysis of fructose 1,6-bisphosphate to fructose 6-phosphate in the presence of divalent cations, acting as a rate-limiting enzyme in gluconeogenesis. Plays a role in regulating glucose sensing and insulin secretion of pancreatic beta-cells. Appears to modulate glycerol gluconeogenesis in liver. Important regulator of appetite and adiposity; increased expression of the protein in liver after nutrient excess increases circulating satiety hormones and reduces appetite-stimulating neuropeptides and thus seems to provide a feedback mechanism to limit weight gain. In Oryctolagus cuniculus (Rabbit), this protein is Fructose-1,6-bisphosphatase 1 (FBP1).